Reading from the N-terminus, the 245-residue chain is NAD-dependent protein deacetylase (245 aa).

Residues 1-245 form the Deacetylase sirtuin-type domain; that stretch reads MIFVQQFEEV…EFVEGLSSRK (245 aa). NAD(+) contacts are provided by A26, T30, F37, R38, Q105, I107, D108, and H123. F37 is a binding site for nicotinamide. 2 residues coordinate nicotinamide: I107 and D108. The active-site Proton acceptor is the H123. Positions 131, 134, 151, and 154 each coordinate Zn(2+). T190, S191, N216, and I234 together coordinate NAD(+).

Belongs to the sirtuin family. Class U subfamily. Zn(2+) is required as a cofactor.

The protein localises to the cytoplasm. It catalyses the reaction N(6)-acetyl-L-lysyl-[protein] + NAD(+) + H2O = 2''-O-acetyl-ADP-D-ribose + nicotinamide + L-lysyl-[protein]. Its function is as follows. NAD-dependent protein deacetylase which modulates the activities of several enzymes which are inactive in their acetylated form. The chain is NAD-dependent protein deacetylase from Bacillus cereus (strain ZK / E33L).